Reading from the N-terminus, the 706-residue chain is Paxillin-like protein 1 (706 aa).

4 disordered regions span residues 24–192 (ERAG…EQDL), 222–258 (VLDQ…LNFE), 279–341 (AKQE…TKVE), and 514–537 (IDNS…SSDA). Residues 35–64 (PFSSQRNASTGSLQASVKSPPITRQRNVSA) show a composition bias toward polar residues. Phosphoserine occurs at positions 43 and 63. 2 stretches are compositionally biased toward low complexity: residues 73–86 (KSAY…AYSS) and 117–129 (SSRP…SISR). Composition is skewed to basic and acidic residues over residues 130-150 (PSER…DRQA) and 222-236 (VLDQ…KEES). A compositionally biased stretch (acidic residues) spans 237 to 252 (SIEYESEGQQEDENDI). Over residues 279–290 (AKQEEKNTEPKI) the composition is skewed to basic and acidic residues. Residues 296 to 308 (TRESNTPSLTMNA) show a composition bias toward polar residues. LIM zinc-binding domains lie at 556 to 612 (CRAC…CQKH) and 621 to 672 (CKVC…CGNH).

The protein is Paxillin-like protein 1 (PXL1) of Saccharomyces cerevisiae (strain ATCC 204508 / S288c) (Baker's yeast).